The primary structure comprises 252 residues: Delta-like protein dsl-1 (252 aa).

The N-terminal stretch at 1-17 (MLKYLIFLAILISVVHS) is a signal peptide. Residues 120–164 (IKCNRYWHGLHCDHFCNDDFARTINRRCTQNGTLGCLEGFHGPNC) form the DSL domain. Cystine bridges form between C122–C131, C135–C147, C155–C164, C173–C181, C175–C197, and C199–C209. The EGF-like domain maps to 169-210 (PADSCKCQNGGKCVSSLENTWAQNGSLICECRLGHFEGKHCE).

May interact with lin-12/Notch receptor.

Its subcellular location is the secreted. Functionally, probable secreted Notch ligand involved in the mediation of Notch signaling. Involved in the lin-12/Notch pathway-mediated signaling of cell fate in vulval precursor cells (VPCs), acting redundantly with lag-2, apx-1 and osm-11. May also be involved in glp-1/Notch signaling. This chain is Delta-like protein dsl-1, found in Caenorhabditis elegans.